A 180-amino-acid polypeptide reads, in one-letter code: Large ribosomal subunit protein uL6 (180 aa).

Belongs to the universal ribosomal protein uL6 family. Part of the 50S ribosomal subunit.

In terms of biological role, this protein binds to the 23S rRNA, and is important in its secondary structure. It is located near the subunit interface in the base of the L7/L12 stalk, and near the tRNA binding site of the peptidyltransferase center. The protein is Large ribosomal subunit protein uL6 of Prosthecochloris aestuarii (strain DSM 271 / SK 413).